A 161-amino-acid polypeptide reads, in one-letter code: Beta-lactoglobulin-1 (161 aa).

2 disulfide bridges follow: Cys66–Cys159 and Cys106–Cys119.

It belongs to the calycin superfamily. Lipocalin family. As to quaternary structure, monomer. Synthesized in mammary gland and secreted in milk.

The protein resides in the secreted. Functionally, primary component of whey, it binds retinol and is probably involved in the transport of that molecule. This is Beta-lactoglobulin-1 (LGB1) from Canis lupus familiaris (Dog).